The primary structure comprises 678 residues: DNA ligase (678 aa).

Residues 34 to 38 (DSEYD), 83 to 84 (SL), and glutamate 114 contribute to the NAD(+) site. Lysine 116 serves as the catalytic N6-AMP-lysine intermediate. Arginine 137, glutamate 176, lysine 293, and lysine 317 together coordinate NAD(+). Positions 411, 414, 429, and 435 each coordinate Zn(2+). Residues 594-678 (PTRQPLNGES…LMAGYGQTLS (85 aa)) form the BRCT domain.

The protein belongs to the NAD-dependent DNA ligase family. LigA subfamily. Mg(2+) serves as cofactor. The cofactor is Mn(2+).

The catalysed reaction is NAD(+) + (deoxyribonucleotide)n-3'-hydroxyl + 5'-phospho-(deoxyribonucleotide)m = (deoxyribonucleotide)n+m + AMP + beta-nicotinamide D-nucleotide.. In terms of biological role, DNA ligase that catalyzes the formation of phosphodiester linkages between 5'-phosphoryl and 3'-hydroxyl groups in double-stranded DNA using NAD as a coenzyme and as the energy source for the reaction. It is essential for DNA replication and repair of damaged DNA. This chain is DNA ligase, found in Acinetobacter baumannii (strain SDF).